We begin with the raw amino-acid sequence, 185 residues long: Ribosome-recycling factor (185 aa).

Residues 142–165 (IVKDGDAGEDEGSRAEKELDGLTK) form a disordered region.

Belongs to the RRF family.

It is found in the cytoplasm. In terms of biological role, responsible for the release of ribosomes from messenger RNA at the termination of protein biosynthesis. May increase the efficiency of translation by recycling ribosomes from one round of translation to another. The chain is Ribosome-recycling factor from Renibacterium salmoninarum (strain ATCC 33209 / DSM 20767 / JCM 11484 / NBRC 15589 / NCIMB 2235).